The sequence spans 360 residues: Peptide chain release factor 1 (360 aa).

Glutamine 237 bears the N5-methylglutamine mark.

The protein belongs to the prokaryotic/mitochondrial release factor family. Post-translationally, methylated by PrmC. Methylation increases the termination efficiency of RF1.

Its subcellular location is the cytoplasm. Peptide chain release factor 1 directs the termination of translation in response to the peptide chain termination codons UAG and UAA. The polypeptide is Peptide chain release factor 1 (Azotobacter vinelandii (strain DJ / ATCC BAA-1303)).